Here is a 224-residue protein sequence, read N- to C-terminus: UPF0502 protein Psyr_2419 (224 aa).

This sequence belongs to the UPF0502 family.

This is UPF0502 protein Psyr_2419 from Pseudomonas syringae pv. syringae (strain B728a).